The chain runs to 457 residues: Bifunctional protein GlmU (457 aa).

A pyrophosphorylase region spans residues 1–230; that stretch reads MSKRYAVVLA…FEESLGVNDR (230 aa). UDP-N-acetyl-alpha-D-glucosamine-binding positions include 9-12, K23, Q73, and 78-79; these read LAAG and GT. Mg(2+) is bound at residue D103. 4 residues coordinate UDP-N-acetyl-alpha-D-glucosamine: G140, E155, N170, and N228. N228 serves as a coordination point for Mg(2+). Residues 231 to 251 are linker; it reads IALAEASRLMQRRINENHMRN. Residues 252 to 457 form an N-acetyltransferase region; it reads GVTLVNPENT…GYAKHLNHGK (206 aa). Residues R333 and K351 each coordinate UDP-N-acetyl-alpha-D-glucosamine. The active-site Proton acceptor is H363. Residues Y366 and N377 each coordinate UDP-N-acetyl-alpha-D-glucosamine. Acetyl-CoA contacts are provided by residues 386–387, A423, and R440; that span reads NY.

It in the N-terminal section; belongs to the N-acetylglucosamine-1-phosphate uridyltransferase family. In the C-terminal section; belongs to the transferase hexapeptide repeat family. As to quaternary structure, homotrimer. The cofactor is Mg(2+).

The protein resides in the cytoplasm. The catalysed reaction is alpha-D-glucosamine 1-phosphate + acetyl-CoA = N-acetyl-alpha-D-glucosamine 1-phosphate + CoA + H(+). It catalyses the reaction N-acetyl-alpha-D-glucosamine 1-phosphate + UTP + H(+) = UDP-N-acetyl-alpha-D-glucosamine + diphosphate. It participates in nucleotide-sugar biosynthesis; UDP-N-acetyl-alpha-D-glucosamine biosynthesis; N-acetyl-alpha-D-glucosamine 1-phosphate from alpha-D-glucosamine 6-phosphate (route II): step 2/2. Its pathway is nucleotide-sugar biosynthesis; UDP-N-acetyl-alpha-D-glucosamine biosynthesis; UDP-N-acetyl-alpha-D-glucosamine from N-acetyl-alpha-D-glucosamine 1-phosphate: step 1/1. It functions in the pathway bacterial outer membrane biogenesis; LPS lipid A biosynthesis. Functionally, catalyzes the last two sequential reactions in the de novo biosynthetic pathway for UDP-N-acetylglucosamine (UDP-GlcNAc). The C-terminal domain catalyzes the transfer of acetyl group from acetyl coenzyme A to glucosamine-1-phosphate (GlcN-1-P) to produce N-acetylglucosamine-1-phosphate (GlcNAc-1-P), which is converted into UDP-GlcNAc by the transfer of uridine 5-monophosphate (from uridine 5-triphosphate), a reaction catalyzed by the N-terminal domain. This chain is Bifunctional protein GlmU, found in Listeria monocytogenes serotype 4b (strain CLIP80459).